The sequence spans 346 residues: Phosphate acyltransferase (346 aa).

Belongs to the PlsX family. In terms of assembly, homodimer. Probably interacts with PlsY.

The protein resides in the cytoplasm. It catalyses the reaction a fatty acyl-[ACP] + phosphate = an acyl phosphate + holo-[ACP]. Its pathway is lipid metabolism; phospholipid metabolism. Its function is as follows. Catalyzes the reversible formation of acyl-phosphate (acyl-PO(4)) from acyl-[acyl-carrier-protein] (acyl-ACP). This enzyme utilizes acyl-ACP as fatty acyl donor, but not acyl-CoA. In Brucella ovis (strain ATCC 25840 / 63/290 / NCTC 10512), this protein is Phosphate acyltransferase.